We begin with the raw amino-acid sequence, 363 residues long: tRNA-specific 2-thiouridylase MnmA (363 aa).

Residues 8–15 and Leu34 contribute to the ATP site; that span reads AMSGGVDS. Cys103 serves as the catalytic Nucleophile. Cys103 and Cys195 are oxidised to a cystine. An ATP-binding site is contributed by Gly127. Positions 145 to 147 are interaction with tRNA; it reads KDQ. Catalysis depends on Cys195, which acts as the Cysteine persulfide intermediate.

This sequence belongs to the MnmA/TRMU family.

It localises to the cytoplasm. The enzyme catalyses S-sulfanyl-L-cysteinyl-[protein] + uridine(34) in tRNA + AH2 + ATP = 2-thiouridine(34) in tRNA + L-cysteinyl-[protein] + A + AMP + diphosphate + H(+). In terms of biological role, catalyzes the 2-thiolation of uridine at the wobble position (U34) of tRNA, leading to the formation of s(2)U34. This Thermobifida fusca (strain YX) protein is tRNA-specific 2-thiouridylase MnmA.